A 339-amino-acid chain; its full sequence is GTPase Obg (339 aa).

The 159-residue stretch at 1 to 159 (MKFVDEAFVR…RELKLELKLL (159 aa)) folds into the Obg domain. Residues 127 to 147 (NTHFKSSTNRAPRRTTSGEEG) form a disordered region. The OBG-type G domain occupies 160–333 (ADVGLLGLPN…LCYDLMSFLE (174 aa)). GTP contacts are provided by residues 166–173 (GLPNAGKS), 191–195 (FTTLY), 213–216 (DIPG), 283–286 (NKID), and 314–316 (SAI). Residues Ser-173 and Thr-193 each contribute to the Mg(2+) site.

It belongs to the TRAFAC class OBG-HflX-like GTPase superfamily. OBG GTPase family. Monomer. The cofactor is Mg(2+).

It is found in the cytoplasm. Functionally, an essential GTPase which binds GTP, GDP and possibly (p)ppGpp with moderate affinity, with high nucleotide exchange rates and a fairly low GTP hydrolysis rate. Plays a role in control of the cell cycle, stress response, ribosome biogenesis and in those bacteria that undergo differentiation, in morphogenesis control. The chain is GTPase Obg from Coxiella burnetii (strain CbuG_Q212) (Coxiella burnetii (strain Q212)).